A 348-amino-acid polypeptide reads, in one-letter code: DNA ligase C1 (348 aa).

Catalysis depends on K32, which acts as the N6-AMP-lysine intermediate.

This sequence belongs to the ATP-dependent DNA ligase family. Requires a divalent metal cation as cofactor.

The catalysed reaction is ATP + (deoxyribonucleotide)n-3'-hydroxyl + 5'-phospho-(deoxyribonucleotide)m = (deoxyribonucleotide)n+m + AMP + diphosphate.. DNA ligase that seals nicks in double-stranded DNA during DNA replication, DNA recombination and DNA repair. Has weak intrinsic nick joining activities and accumulates DNA-adenylate. Acts as a backup for LigD in the Ku-LigD-dependent NHEJ pathway. This Mycolicibacterium smegmatis (strain ATCC 700084 / mc(2)155) (Mycobacterium smegmatis) protein is DNA ligase C1 (ligC).